Reading from the N-terminus, the 359-residue chain is DNA integrity scanning protein DisA (359 aa).

Residues 7–145 enclose the DAC domain; it reads DDIFRATLAA…AGRRYVLDGA (139 aa). Residues G74, L92, and 105 to 109 contribute to the ATP site; that span reads TRHRT.

It belongs to the DisA family. Homooctamer. The cofactor is Mg(2+).

The enzyme catalyses 2 ATP = 3',3'-c-di-AMP + 2 diphosphate. Functionally, participates in a DNA-damage check-point that is active prior to asymmetric division when DNA is damaged. DisA forms globular foci that rapidly scan along the chromosomes during sporulation, searching for lesions. When a lesion is present, DisA pauses at the lesion site. This triggers a cellular response that culminates in a temporary block in sporulation initiation. Also has diadenylate cyclase activity, catalyzing the condensation of 2 ATP molecules into cyclic di-AMP (c-di-AMP). c-di-AMP acts as a signaling molecule that couples DNA integrity with progression of sporulation. The rise in c-di-AMP level generated by DisA while scanning the chromosome, operates as a positive signal that advances sporulation; upon encountering a lesion, the DisA focus arrests at the damaged site and halts c-di-AMP synthesis. The polypeptide is DNA integrity scanning protein DisA (Parafrankia sp. (strain EAN1pec)).